A 319-amino-acid polypeptide reads, in one-letter code: L-lactate dehydrogenase (319 aa).

NAD(+) contacts are provided by residues Val-17, Asp-38, Lys-43, Tyr-69, and 83–84 (GA). Substrate-binding residues include Gln-86 and Arg-92. Residues Thr-105, 122 to 124 (ATN), and Ser-147 each bind NAD(+). A substrate-binding site is contributed by 124–127 (NPVD). 152–155 (DTAR) is a binding site for substrate. Beta-D-fructose 1,6-bisphosphate contacts are provided by Arg-157 and His-172. His-179 (proton acceptor) is an active-site residue. Phosphotyrosine is present on Tyr-224. Residue Thr-233 participates in substrate binding.

The protein belongs to the LDH/MDH superfamily. LDH family. Homotetramer.

The protein localises to the cytoplasm. The catalysed reaction is (S)-lactate + NAD(+) = pyruvate + NADH + H(+). It functions in the pathway fermentation; pyruvate fermentation to lactate; (S)-lactate from pyruvate: step 1/1. With respect to regulation, allosterically activated by fructose 1,6-bisphosphate (FBP). Catalyzes the conversion of lactate to pyruvate. The sequence is that of L-lactate dehydrogenase from Geobacillus sp. (strain WCH70).